A 364-amino-acid polypeptide reads, in one-letter code: Pectinesterase (364 aa).

The signal sequence occupies residues 1-22 (MSCIAVEAVLLGILLYIPIVLS). N103 is a glycosylation site (N-linked (GlcNAc...) asparagine). D220 is an active-site residue.

The protein resides in the secreted. It catalyses the reaction [(1-&gt;4)-alpha-D-galacturonosyl methyl ester](n) + n H2O = [(1-&gt;4)-alpha-D-galacturonosyl](n) + n methanol + n H(+). Its pathway is glycan metabolism; pectin degradation; 2-dehydro-3-deoxy-D-gluconate from pectin: step 1/5. Its function is as follows. Catalyzes the demethylesterification of homogalacturonan components of pectin. This chain is Pectinesterase, found in Parthenium hysterophorus (Santa Maria feverfew).